Reading from the N-terminus, the 862-residue chain is Protein kintoun (862 aa).

4 disordered regions span residues 208–229 (KLLP…RTTK), 564–602 (TKRE…KKER), 626–670 (GEGA…STMP), and 743–854 (RREV…QFKS). Over residues 564–586 (TKREEHGEPECDEKDGSEAEKAR) the composition is skewed to basic and acidic residues. The span at 587–601 (TLQKAKRNSRKKKKE) shows a compositional bias: basic residues. Basic and acidic residues-rich tracts occupy residues 748–757 (RRADARRMSE) and 766–785 (KDAH…HDEK).

It belongs to the PIH1 family. Kintoun subfamily.

It localises to the cytoplasm. Required for cytoplasmic pre-assembly of axonemal dyneins, thereby playing a central role in motility in cilia and flagella. Involved in pre-assembly of dynein arm complexes in the cytoplasm before intraflagellar transport loads them for the ciliary compartment. In Anopheles gambiae (African malaria mosquito), this protein is Protein kintoun.